The sequence spans 2382 residues: Highly reducing polyketide synthase srdA (2382 aa).

The interval 1–25 (MAPHSTLDSDYSSGSSTPTSASAAG) is disordered. A Ketosynthase family 3 (KS3) domain is found at 44 to 474 (QEPIAIIGMG…GANAHAILEA (431 aa)). Catalysis depends on for beta-ketoacyl synthase activity residues C217, H352, and H390. The interval 580 to 891 (VFTGQGAQWP…HYGSALSRGK (312 aa)) is malonyl-CoA:ACP transacylase (MAT) domain. The active-site For malonyltransferase activity is the S672. The segment at 971-1108 (HDLLGSQVHG…GLVKIDSAPA (138 aa)) is N-terminal hotdog fold. The tract at residues 971–1274 (HDLLGSQVHG…RQVSYQSGIQ (304 aa)) is dehydratase (DH) domain. Residues 971-1275 (HDLLGSQVHG…QVSYQSGIQQ (305 aa)) enclose the PKS/mFAS DH domain. Residue H1003 is the Proton acceptor; for dehydratase activity of the active site. The tract at residues 1121 to 1275 (MEPQAPRTWY…QVSYQSGIQQ (155 aa)) is C-terminal hotdog fold. The Proton donor; for dehydratase activity role is filled by D1189. The segment at 1668–1979 (GQIDSIFFRR…AKGHSGSVVV (312 aa)) is enoyl reductase (ER) domain. The segment at 2004-2180 (SYLLVGCLGG…ATSIGLGMIS (177 aa)) is ketoreductase (KR) domain. Residues 2298–2376 (SVEDAVLKMI…LLSELITKKM (79 aa)) enclose the Carrier domain. S2335 bears the O-(pantetheine 4'-phosphoryl)serine mark.

Highly reducing polyketide synthase; part of the gene cluster that mediates the biosynthesis of sordarial, a salicylic aldehyde structurally related to the phytotoxin pyriculol. The most interesting aspect of this pathway is formation of an aromatic product from the highly reducing polyketide synthase srdA. SrdA synthesizes a reduced polyketide chain from one molecule of acetyl-CoA and five molecules of malonyl-CoA. The polyketide chain is then reductively released as an aldehyde. The oxidoreductases srdC, srdD and srdE then oxidize one of the hydroxy groups to facilitate the intramolecular aldol condensation, followed by dehydration to yield a salicylic aldehyde. This aldehyde can undergo facile reduction by endogenous reductases to yield the alcohol 1-hydroxy-2-hydroxymethyl-3-pent-1,3-dienylbenzene. The flavin-dependent srdI counteract against the propensity of the aldehydes to be reduced under physiological conditions and is responsible for reoxidizing 1-hydroxy-2-hydroxymethyl-3-pent-1,3-dienylbenzene back to the salicylic aldehyde. This salicylic aldehyde is then selectively epoxidized by the cupin-domain-containing oxidoreductase srdB to yield the epoxide, which can be hydrolyzed stereoselectively by the hydrolase srdG to give the final product sordarial. This chain is Highly reducing polyketide synthase srdA, found in Neurospora crassa (strain ATCC 24698 / 74-OR23-1A / CBS 708.71 / DSM 1257 / FGSC 987).